A 79-amino-acid polypeptide reads, in one-letter code: Defensin-like protein 54 (79 aa).

Residues 1 to 27 (MGIKKTSATVFLVIILTISFSYYDVEA) form the signal peptide. Cystine bridges form between cysteine 39–cysteine 76, cysteine 43–cysteine 67, cysteine 52–cysteine 74, and cysteine 56–cysteine 75.

It belongs to the DEFL family.

The protein localises to the secreted. This chain is Defensin-like protein 54, found in Arabidopsis thaliana (Mouse-ear cress).